The chain runs to 2207 residues: MTAAANWVANGASLEDCHSNLFSLAELTGIKWRRYNFGGHGDCGPIISAPAQDDPILLSFIRCLQANLLCVWRRDVKPDCKELWIFWWGDEPNLVGVIHHELQVVEEGLWENGLSYECRTLLFKAIHNLLERCLMDKNFVRIGKWFVRPYDKDEKPVNKSEHLSCAFTFFLHGESNVCTSVEIAQHQPIYLINEEHLHMAQSSPAPFQVLVSPYGLNGTLTGHAYKMSDPAARKLIEEWHCFYPMVLRKREEPREEAELGYDDDFPVAVEVIVGGVRMVYPSAFVLVSQNDIPVPQSGHGTVAQQGLGSVKDPSNCGMPLTPPTSPEQVVIGESGGVQSAASHLGSQDGGMSTMHSPKRSRKTPPKLHSHMVRRVWRECILSRAQSKRSQMSTPTREEEAAHSPAAWDFVDPTQRVSCSCSRHKLLKRCAVGPSRPPAISQPGFSAGLPSSSSLPPPASSKHKTTERQEKGDKLQKRPLVPFHHRPSVAEELCVEQDAPGQKLGLAGIDASLEVSNTRKYDKQMAVPSRNTSKQMNLNPMDSPHSPISPLPPTLSPQPRGQEAESLDPPSVPVNPALYGNGLDLQQLSTIEDRTVLVGQRLPLMAEASETALYSGLRPSYTESSDRWWQSFRLPSSEDAEFRPPELQGERFDTALDLNPESTALQRLLAQPNKRFKIWQDEQPQVQPLPFLDPSPLSQQPGDTLGEVNDPYTFEDGDIKYIFTANKKCKQGTEKDSLKKNKSEDGFGTKDVTTPGHSTPVPDGKNAMSIFSSATKTDVRQDSAAGRAGSGSLTQVTDLAPSLHDLDNIFDNSDDDELGAVSPALRSSKMPTVGTEERPPGKDGRAAGPYPPTVADLQRMFPTPPSLEQHPAFSPVMNYKDGVSSETVTALGMMESPVVSMVPTHLTEFRMEVEDGLGSPKPEEIKDFSYVHKVPQFQPFVGSSMFAPLKTLPSHCLLPLKTPDACLFRPSWAVPPKMEQLPMPPAASSIRDGYNNVPSVGSLADPDYVNTPQMNTPVTLNSAAPASNSGAGVLPSPATPRFSVPTPRTPRTPRTPRGGGTASGQGSVKYDSTDQGSPASTPSTTRPLNSVEPATMQPIPEAHSLYVTLILSDSVMNVFKDRNFDSCCICACNMNIKGADVGLYIPDSSKEDQYRCTCGFSAIVNRKLGYNSGLFLEDELDIFGKNSDIGQAAERRLMMCQSSGQSTLLPQVEGARKAPEPPVSLLLLLQNQHTQPFASLSFLDYISSANRHALPCVSWTYDRVQADNNDYWTECFNALEQGRQYVDNPTGGKVDEALVRSATVHCWPHSNVLDTSMLSSQDVVRMLLSLQPFLQDAIQKKRTGRTWENIQHVQGPLTWQQFHKMAGRGTYGSEESPEPLPIPTLLVGYDKEFLTISPFSLPFWERLLLEPYGGHRDVAYIVVCPENEALLEGAKTFFRDLSAVYEMCRLGQHKPICKVLRDGIMRVGKTVAQKLTEELVSEWFNQPWSSEESDNHSRLKLYAQVCRHHLAPYLATLQLDSGLLMPPKHQSPPAEAQGQATPGNAGSLPSNSGSGAPPAGSAFNPTSSSSANPTTSSSSASSGPPGSSAASAPGITQMNTTSSSGFGGGVGGQNPSAGGSSTDRTPGNVACGDTEPGQSCTQSSQDGQDSVTERERIGIPTEPDSADSHAYPPAVVIYMVDPFTYTAEEDSSSGNFWLLSLMRCYTEMLDHLPEHMRSSFILQIVPCQYMLQTMKDEHVFYIQYLKSMAFSVYCQCRRPLPTQIHIKSLTGFGPAASIEMTLKNPERPSPIQLYSPPFILAPIKDKQTEPGETFGEASQKYNVLFVGYCLSHDQRWLLASCTDLHGELLETCVVNIALPSRSRKSKVSARKVGLQKLWEWCLGIVQMTSLPWRVVIGRLGRLGHGELKDWSILLGECSLQTISKQLKDVCRMCGISAADSPSILSACLVAMEPQGSFVVMPDAVTMGSVFGRSTALNMQSSQLNTPQDASCTHILVFPTSSTIQVAPANYPNEDGFSPNNDDMFVDLPFPDDMDNDIGILMTGNLHSSPNSSPVPSPGSPSGIGVGSHFQHSRSQGERLLSREAPEELKQQPLALGYFVSTAKAENLPQWFWSSCPQARNQCPLFLKASLHHHISVAQTDELLPARTSQRAPHPLDSKTTSDVLRFVLEQYNALSWLTCNPATQDRTSCLPVHFVVLTQLYNAIMNML.

Positions 337 to 355 (VQSAASHLGSQDGGMSTMH) are enriched in polar residues. Disordered stretches follow at residues 337–368 (VQSA…PKLH), 384–403 (AQSK…AAHS), 431–479 (VGPS…KRPL), and 519–574 (KYDK…VPVN). Basic residues predominate over residues 356-368 (SPKRSRKTPPKLH). A compositionally biased stretch (polar residues) spans 384–394 (AQSKRSQMSTP). Residues 442–453 (PGFSAGLPSSSS) are compositionally biased toward low complexity. Positions 463–475 (KTTERQEKGDKLQ) are enriched in basic and acidic residues. Positions 528 to 539 (SRNTSKQMNLNP) are enriched in polar residues. Residues 546–555 (PISPLPPTLS) are compositionally biased toward pro residues. 2 positions are modified to phosphoserine: serine 548 and serine 555. The LXXLL motif 1 motif lies at 664–668 (LQRLL). Positions 731–747 (GTEKDSLKKNKSEDGFG) are enriched in basic and acidic residues. The disordered stretch occupies residues 731–767 (GTEKDSLKKNKSEDGFGTKDVTTPGHSTPVPDGKNAM). Serine 812 and serine 821 each carry phosphoserine. The interval 816–847 (ELGAVSPALRSSKMPTVGTEERPPGKDGRAAG) is disordered. Basic and acidic residues predominate over residues 834 to 844 (TEERPPGKDGR). Serine 918 is modified (phosphoserine). Residues 1004 to 1091 (DPDYVNTPQM…STTRPLNSVE (88 aa)) are disordered. Polar residues predominate over residues 1009–1019 (NTPQMNTPVTL). Over residues 1020–1031 (NSAAPASNSGAG) the composition is skewed to low complexity. Polar residues predominate over residues 1072-1087 (TDQGSPASTPSTTRPL). The LXXLL motif 2 signature appears at 1224 to 1228 (LLLLL). Residues 1379-1400 (LPIPTLLVGYDKEFLTISPFSL) form a leucine-zipper region. Disordered stretches follow at residues 1523–1652 (LMPP…SVTE) and 2042–2077 (GNLH…QGER). Residues 1541–1593 (PGNAGSLPSNSGSGAPPAGSAFNPTSSSSANPTTSSSSASSGPPGSSAASAPG) are compositionally biased toward low complexity. 2 stretches are compositionally biased toward polar residues: residues 1612–1624 (QNPS…TDRT) and 1635–1649 (PGQS…GQDS). Serine 2080 carries the phosphoserine modification.

The protein belongs to the Mediator complex subunit 13 family. Component of the Mediator complex, which is composed of MED1, MED4, MED6, MED7, MED8, MED9, MED10, MED11, MED12, MED13, MED13L, MED14, MED15, MED16, MED17, MED18, MED19, MED20, MED21, MED22, MED23, MED24, MED25, MED26, MED27, MED29, MED30, MED31, CCNC, CDK8 and CDC2L6/CDK11. The MED12, MED13, CCNC and CDK8 subunits form a distinct module termed the CDK8 module. Mediator containing the CDK8 module is less active than Mediator lacking this module in supporting transcriptional activation. Individual preparations of the Mediator complex lacking one or more distinct subunits have been variously termed ARC, CRSP, DRIP, PC2, SMCC and TRAP. Highly expressed in heart and weakly expressed in brain, spleen, lung, liver, kidney and testis.

The protein localises to the nucleus. Its function is as follows. Component of the Mediator complex, a coactivator involved in the regulated transcription of nearly all RNA polymerase II-dependent genes. Mediator functions as a bridge to convey information from gene-specific regulatory proteins to the basal RNA polymerase II transcription machinery. Mediator is recruited to promoters by direct interactions with regulatory proteins and serves as a scaffold for the assembly of a functional preinitiation complex with RNA polymerase II and the general transcription factors. This subunit may specifically regulate transcription of targets of the Wnt signaling pathway and SHH signaling pathway. The polypeptide is Mediator of RNA polymerase II transcription subunit 13-like (Med13l) (Mus musculus (Mouse)).